The chain runs to 175 residues: B9 domain-containing protein 2 (175 aa).

Residues 2–118 (AEVHVIGQII…DCPTWRPLGS (117 aa)) enclose the C2 B9-type domain.

The protein belongs to the B9D family. As to quaternary structure, part of the tectonic-like complex (also named B9 complex). Interacts with TUBG1.

Its subcellular location is the cytoplasm. The protein resides in the cytoskeleton. It is found in the cilium basal body. The protein localises to the cilium axoneme. It localises to the nucleus. Functionally, component of the tectonic-like complex, a complex localized at the transition zone of primary cilia and acting as a barrier that prevents diffusion of transmembrane proteins between the cilia and plasma membranes. In Rattus norvegicus (Rat), this protein is B9 domain-containing protein 2 (B9d2).